Consider the following 141-residue polypeptide: Nucleoside triphosphatase NudI (141 aa).

The region spanning 1-141 (MRQRTIVCPL…RKTLRLKGLL (141 aa)) is the Nudix hydrolase domain. The Nudix box motif lies at 38–59 (GGVEPGERIEEALRREIREELG).

It belongs to the Nudix hydrolase family. NudI subfamily. Monomer. Requires Mg(2+) as cofactor.

It catalyses the reaction a ribonucleoside 5'-triphosphate + H2O = a ribonucleoside 5'-phosphate + diphosphate + H(+). It carries out the reaction a 2'-deoxyribonucleoside 5'-triphosphate + H2O = a 2'-deoxyribonucleoside 5'-phosphate + diphosphate + H(+). The enzyme catalyses dUTP + H2O = dUMP + diphosphate + H(+). The catalysed reaction is dTTP + H2O = dTMP + diphosphate + H(+). It catalyses the reaction dCTP + H2O = dCMP + diphosphate + H(+). In terms of biological role, catalyzes the hydrolysis of nucleoside triphosphates, with a preference for pyrimidine deoxynucleoside triphosphates (dUTP, dTTP and dCTP). This is Nucleoside triphosphatase NudI from Escherichia coli O9:H4 (strain HS).